We begin with the raw amino-acid sequence, 901 residues long: Probable inorganic carbon transporter subunit DabA (901 aa).

Residues C424, D426, H606, and C621 each contribute to the Zn(2+) site.

The protein belongs to the inorganic carbon transporter (TC 9.A.2) DabA family. Forms a complex with DabB. It depends on Zn(2+) as a cofactor.

It is found in the cell membrane. In terms of biological role, part of an energy-coupled inorganic carbon pump. The sequence is that of Probable inorganic carbon transporter subunit DabA from Staphylococcus aureus (strain bovine RF122 / ET3-1).